A 269-amino-acid chain; its full sequence is 2-dehydro-3-deoxyphosphooctonate aldolase (269 aa).

This sequence belongs to the KdsA family.

The protein localises to the cytoplasm. It catalyses the reaction D-arabinose 5-phosphate + phosphoenolpyruvate + H2O = 3-deoxy-alpha-D-manno-2-octulosonate-8-phosphate + phosphate. It participates in carbohydrate biosynthesis; 3-deoxy-D-manno-octulosonate biosynthesis; 3-deoxy-D-manno-octulosonate from D-ribulose 5-phosphate: step 2/3. Its pathway is bacterial outer membrane biogenesis; lipopolysaccharide biosynthesis. This Chlamydia pneumoniae (Chlamydophila pneumoniae) protein is 2-dehydro-3-deoxyphosphooctonate aldolase (kdsA).